Here is a 273-residue protein sequence, read N- to C-terminus: Phosphate import ATP-binding protein PstB 1 (273 aa).

Positions I27–I268 constitute an ABC transporter domain. G59–S66 is an ATP binding site.

It belongs to the ABC transporter superfamily. Phosphate importer (TC 3.A.1.7) family. The complex is composed of two ATP-binding proteins (PstB), two transmembrane proteins (PstC and PstA) and a solute-binding protein (PstS).

Its subcellular location is the cell inner membrane. It catalyses the reaction phosphate(out) + ATP + H2O = ADP + 2 phosphate(in) + H(+). Functionally, part of the ABC transporter complex PstSACB involved in phosphate import. Responsible for energy coupling to the transport system. The polypeptide is Phosphate import ATP-binding protein PstB 1 (Vibrio cholerae serotype O1 (strain ATCC 39315 / El Tor Inaba N16961)).